A 135-amino-acid chain; its full sequence is UPF0251 protein Hore_18270 (135 aa).

This sequence belongs to the UPF0251 family.

The sequence is that of UPF0251 protein Hore_18270 from Halothermothrix orenii (strain H 168 / OCM 544 / DSM 9562).